Consider the following 132-residue polypeptide: Large-conductance mechanosensitive channel (132 aa).

3 consecutive transmembrane segments (helical) span residues V14–L34, I38–G58, and G67–V87.

Belongs to the MscL family. In terms of assembly, homopentamer.

The protein localises to the cell membrane. Channel that opens in response to stretch forces in the membrane lipid bilayer. May participate in the regulation of osmotic pressure changes within the cell. The polypeptide is Large-conductance mechanosensitive channel (Bacillus cereus (strain ATCC 10987 / NRS 248)).